The sequence spans 917 residues: Glutamate receptor (917 aa).

Residues 1–19 form the signal peptide; that stretch reads MDTCVFPLVVLWISMRITS. Topologically, residues 20–556 are extracellular; it reads TLDEVPIGGI…HFFSFMEPLS (537 aa). N-linked (GlcNAc...) asparagine glycosylation is found at Asn-62, Asn-95, Asn-121, Asn-125, Asn-229, Asn-251, Asn-261, Asn-272, Asn-418, Asn-419, Asn-424, and Asn-491. Residues 557–577 traverse the membrane as a helical segment; sequence SEIWMCIVFAYIGVSVVLFLV. Residues 578–631 are Cytoplasmic-facing; that stretch reads SRFSPNEWHLSEAHHSYIANDFSISNSLWFSLGAFMQQGCDISPRSMSGRIVGS. The helical transmembrane segment at 632–652 threads the bilayer; sequence VWWFFTLIIISSYTANLAAFL. At 653–818 the chain is on the extracellular side; sequence TVERMLTPID…GAQSALTLAN (166 aa). Asn-775 is a glycosylation site (N-linked (GlcNAc...) asparagine). The chain crosses the membrane as a helical span at residues 819–839; sequence VAGIFYILIGGLVVAVLSAAF. Topologically, residues 840–917 are cytoplasmic; that stretch reads EFLYKSRMDS…FEDSNTHTEV (78 aa). The disordered stretch occupies residues 871 to 896; it reads HIDSEQKTTGNGTRRRSHNSVTYTYT.

The protein belongs to the glutamate-gated ion channel (TC 1.A.10.1) family.

The protein localises to the cell membrane. It is found in the postsynaptic cell membrane. Receptor for glutamate. L-glutamate acts as an excitatory neurotransmitter at many synapses in the central nervous system. The postsynaptic actions of Glu are mediated by a variety of receptors. This chain is Glutamate receptor, found in Lymnaea stagnalis (Great pond snail).